The primary structure comprises 209 residues: A-type ATP synthase subunit D (209 aa).

It belongs to the V-ATPase D subunit family. Has multiple subunits, A(3), B(3), C, D, E, F, G, I and K(x); there may be a few other subunits as well.

Its subcellular location is the cell membrane. Component of the A-type ATP synthase that produces ATP from ADP in the presence of a proton gradient across the membrane. The sequence is that of A-type ATP synthase subunit D from Methanosarcina mazei (strain ATCC BAA-159 / DSM 3647 / Goe1 / Go1 / JCM 11833 / OCM 88) (Methanosarcina frisia).